A 108-amino-acid chain; its full sequence is T cell receptor alpha variable 1-1 (108 aa).

A signal peptide spans Met1–Gly18. The region spanning Gln19–Arg108 is the Ig-like domain. Asn38 carries N-linked (GlcNAc...) asparagine glycosylation. A disulfide bridge connects residues Cys39 and Cys105.

In terms of assembly, alpha-beta TR is a heterodimer composed of an alpha and beta chain; disulfide-linked. The alpha-beta TR is associated with the transmembrane signaling CD3 coreceptor proteins to form the TR-CD3 (TcR or TCR). The assembly of alpha-beta TR heterodimers with CD3 occurs in the endoplasmic reticulum where a single alpha-beta TR heterodimer associates with one CD3D-CD3E heterodimer, one CD3G-CD3E heterodimer and one CD247 homodimer forming a stable octameric structure. CD3D-CD3E and CD3G-CD3E heterodimers preferentially associate with TR alpha and TR beta chains, respectively. The association of the CD247 homodimer is the last step of TcR assembly in the endoplasmic reticulum and is required for transport to the cell surface.

Its subcellular location is the cell membrane. V region of the variable domain of T cell receptor (TR) alpha chain that participates in the antigen recognition. Alpha-beta T cell receptors are antigen specific receptors which are essential to the immune response and are present on the cell surface of T lymphocytes. Recognize peptide-major histocompatibility (MH) (pMH) complexes that are displayed by antigen presenting cells (APC), a prerequisite for efficient T cell adaptive immunity against pathogens. Binding of alpha-beta TR to pMH complex initiates TR-CD3 clustering on the cell surface and intracellular activation of LCK that phosphorylates the ITAM motifs of CD3G, CD3D, CD3E and CD247 enabling the recruitment of ZAP70. In turn ZAP70 phosphorylates LAT, which recruits numerous signaling molecules to form the LAT signalosome. The LAT signalosome propagates signal branching to three major signaling pathways, the calcium, the mitogen-activated protein kinase (MAPK) kinase and the nuclear factor NF-kappa-B (NF-kB) pathways, leading to the mobilization of transcription factors that are critical for gene expression and essential for T cell growth and differentiation. The T cell repertoire is generated in the thymus, by V-(D)-J rearrangement. This repertoire is then shaped by intrathymic selection events to generate a peripheral T cell pool of self-MH restricted, non-autoaggressive T cells. Post-thymic interaction of alpha-beta TR with the pMH complexes shapes TR structural and functional avidity. In Homo sapiens (Human), this protein is T cell receptor alpha variable 1-1.